The chain runs to 190 residues: ATP synthase subunit C lysine N-methyltransferase (190 aa).

The protein belongs to the ANT/ATPSC lysine N-methyltransferase family.

Its subcellular location is the mitochondrion. The enzyme catalyses L-lysyl-[protein] + 3 S-adenosyl-L-methionine = N(6),N(6),N(6)-trimethyl-L-lysyl-[protein] + 3 S-adenosyl-L-homocysteine + 3 H(+). In terms of biological role, mitochondrial protein-lysine N-methyltransferase that trimethylates ATP synthase subunit C. Trimethylation is required for proper incorporation of the C subunit into the ATP synthase complex and mitochondrial respiration. The chain is ATP synthase subunit C lysine N-methyltransferase from Caenorhabditis elegans.